Here is a 635-residue protein sequence, read N- to C-terminus: 4-hydroxy-3-methylbut-2-enyl diphosphate reductase (635 aa).

The 4-hydroxy-3-methylbut-2-enyl diphosphate reductase stretch occupies residues 1–279 (MSIILAKKSG…KEAIFKMSNK (279 aa)). Cysteine 12 lines the [4Fe-4S] cluster pocket. (2E)-4-hydroxy-3-methylbut-2-enyl diphosphate-binding residues include histidine 42 and histidine 77. Residues histidine 42 and histidine 77 each contribute to the dimethylallyl diphosphate site. 2 residues coordinate isopentenyl diphosphate: histidine 42 and histidine 77. Cysteine 99 is a binding site for [4Fe-4S] cluster. Histidine 127 is a (2E)-4-hydroxy-3-methylbut-2-enyl diphosphate binding site. Histidine 127 contacts dimethylallyl diphosphate. An isopentenyl diphosphate-binding site is contributed by histidine 127. Glutamate 129 serves as the catalytic Proton donor. (2E)-4-hydroxy-3-methylbut-2-enyl diphosphate is bound at residue threonine 163. [4Fe-4S] cluster is bound at residue cysteine 191. Residues serine 219, serine 220, asparagine 221, and serine 263 each coordinate (2E)-4-hydroxy-3-methylbut-2-enyl diphosphate. Serine 219, serine 220, asparagine 221, and serine 263 together coordinate dimethylallyl diphosphate. Residues serine 219, serine 220, asparagine 221, and serine 263 each contribute to the isopentenyl diphosphate site. S1 motif domains are found at residues 298 to 373 (GQEV…LNRE), 380 to 455 (KEAF…ASRR), 476 to 544 (DTIK…LSIK), and 561 to 630 (GNIV…LSIK).

This sequence in the N-terminal section; belongs to the IspH family. The cofactor is [4Fe-4S] cluster.

The enzyme catalyses isopentenyl diphosphate + 2 oxidized [2Fe-2S]-[ferredoxin] + H2O = (2E)-4-hydroxy-3-methylbut-2-enyl diphosphate + 2 reduced [2Fe-2S]-[ferredoxin] + 2 H(+). It catalyses the reaction dimethylallyl diphosphate + 2 oxidized [2Fe-2S]-[ferredoxin] + H2O = (2E)-4-hydroxy-3-methylbut-2-enyl diphosphate + 2 reduced [2Fe-2S]-[ferredoxin] + 2 H(+). The protein operates within isoprenoid biosynthesis; dimethylallyl diphosphate biosynthesis; dimethylallyl diphosphate from (2E)-4-hydroxy-3-methylbutenyl diphosphate: step 1/1. It functions in the pathway isoprenoid biosynthesis; isopentenyl diphosphate biosynthesis via DXP pathway; isopentenyl diphosphate from 1-deoxy-D-xylulose 5-phosphate: step 6/6. Its function is as follows. Catalyzes the conversion of 1-hydroxy-2-methyl-2-(E)-butenyl 4-diphosphate (HMBPP) into a mixture of isopentenyl diphosphate (IPP) and dimethylallyl diphosphate (DMAPP). Acts in the terminal step of the DOXP/MEP pathway for isoprenoid precursor biosynthesis. The sequence is that of 4-hydroxy-3-methylbut-2-enyl diphosphate reductase from Clostridium tetani (strain Massachusetts / E88).